The primary structure comprises 618 residues: Dihydroxy-acid dehydratase (618 aa).

Asp81 serves as a coordination point for Mg(2+). A [2Fe-2S] cluster-binding site is contributed by Cys122. Mg(2+)-binding residues include Asp123 and Lys124. Lys124 is subject to N6-carboxylysine. [2Fe-2S] cluster is bound at residue Cys195. Position 492 (Glu492) interacts with Mg(2+). Ser518 serves as the catalytic Proton acceptor.

Belongs to the IlvD/Edd family. Homodimer. Requires [2Fe-2S] cluster as cofactor. It depends on Mg(2+) as a cofactor.

It carries out the reaction (2R)-2,3-dihydroxy-3-methylbutanoate = 3-methyl-2-oxobutanoate + H2O. It catalyses the reaction (2R,3R)-2,3-dihydroxy-3-methylpentanoate = (S)-3-methyl-2-oxopentanoate + H2O. The protein operates within amino-acid biosynthesis; L-isoleucine biosynthesis; L-isoleucine from 2-oxobutanoate: step 3/4. It functions in the pathway amino-acid biosynthesis; L-valine biosynthesis; L-valine from pyruvate: step 3/4. Functions in the biosynthesis of branched-chain amino acids. Catalyzes the dehydration of (2R,3R)-2,3-dihydroxy-3-methylpentanoate (2,3-dihydroxy-3-methylvalerate) into 2-oxo-3-methylpentanoate (2-oxo-3-methylvalerate) and of (2R)-2,3-dihydroxy-3-methylbutanoate (2,3-dihydroxyisovalerate) into 2-oxo-3-methylbutanoate (2-oxoisovalerate), the penultimate precursor to L-isoleucine and L-valine, respectively. The chain is Dihydroxy-acid dehydratase from Zymomonas mobilis subsp. mobilis (strain ATCC 31821 / ZM4 / CP4).